The primary structure comprises 596 residues: Elongation factor 4 (596 aa).

The tr-type G domain occupies 2–184 (KHIRNFSIIA…VIVEQIPPPE (183 aa)). Residues 14–19 (DHGKST) and 131–134 (NKID) each bind GTP.

It belongs to the TRAFAC class translation factor GTPase superfamily. Classic translation factor GTPase family. LepA subfamily.

Its subcellular location is the cell inner membrane. It carries out the reaction GTP + H2O = GDP + phosphate + H(+). Its function is as follows. Required for accurate and efficient protein synthesis under certain stress conditions. May act as a fidelity factor of the translation reaction, by catalyzing a one-codon backward translocation of tRNAs on improperly translocated ribosomes. Back-translocation proceeds from a post-translocation (POST) complex to a pre-translocation (PRE) complex, thus giving elongation factor G a second chance to translocate the tRNAs correctly. Binds to ribosomes in a GTP-dependent manner. The chain is Elongation factor 4 from Shewanella sp. (strain MR-7).